Consider the following 445-residue polypeptide: Sporulation-specific glucan 1,3-beta-glucosidase (445 aa).

Residues 1–21 form the signal peptide; it reads MVSFRGLTTLTLLFTKLVNCN. A glycan (N-linked (GlcNAc...) asparagine) is linked at Asn-201. Glu-233 (proton donor) is an active-site residue. The active-site Nucleophile is the Glu-335.

This sequence belongs to the glycosyl hydrolase 5 (cellulase A) family.

It localises to the secreted. It carries out the reaction Successive hydrolysis of beta-D-glucose units from the non-reducing ends of (1-&gt;3)-beta-D-glucans, releasing alpha-glucose.. Probably involved in the processes of spore formation and contributes to ascospore thermoresistance by participating in the morphogenesis of ascospore walls. The enzyme may do this by modifying glucan linkages in the developing ascospore wall, thus strengthening it or lending it plasticity. This is Sporulation-specific glucan 1,3-beta-glucosidase (SPR1) from Saccharomyces cerevisiae (strain ATCC 204508 / S288c) (Baker's yeast).